Consider the following 345-residue polypeptide: NADH-ubiquinone oxidoreductase chain 2 (345 aa).

Transmembrane regions (helical) follow at residues Met-1 to Met-21, His-25 to Ser-45, Phe-60 to Leu-80, Phe-113 to Trp-133, Leu-148 to Gly-168, Val-191 to Phe-211, Ile-239 to Gly-259, His-274 to Leu-294, and Ser-324 to Ile-344.

The protein belongs to the complex I subunit 2 family.

It localises to the mitochondrion inner membrane. It carries out the reaction a ubiquinone + NADH + 5 H(+)(in) = a ubiquinol + NAD(+) + 4 H(+)(out). Its function is as follows. Core subunit of the mitochondrial membrane respiratory chain NADH dehydrogenase (Complex I) that is believed to belong to the minimal assembly required for catalysis. Complex I functions in the transfer of electrons from NADH to the respiratory chain. The immediate electron acceptor for the enzyme is believed to be ubiquinone. The chain is NADH-ubiquinone oxidoreductase chain 2 (MT-ND2) from Varanus baritji (Black-spotted ridge-tailed monitor).